Reading from the N-terminus, the 165-residue chain is AIG2-like protein A (165 aa).

Residue 15–20 (YGSFQD) participates in substrate binding. Glu83 functions as the Proton acceptor in the catalytic mechanism.

It belongs to the gamma-glutamylcyclotransferase family. As to expression, expressed only in seeds.

Its function is as follows. Putative gamma-glutamylcyclotransferase. The sequence is that of AIG2-like protein A from Arabidopsis thaliana (Mouse-ear cress).